Here is a 173-residue protein sequence, read N- to C-terminus: Photosystem I assembly protein Ycf3 (173 aa).

TPR repeat units lie at residues 35 to 68 (AYVY…EDNP), 72 to 105 (GETL…NSNQ), and 120 to 153 (GRIA…NPGG).

The protein belongs to the Ycf3 family.

The protein localises to the cellular thylakoid membrane. Its function is as follows. Essential for the assembly of the photosystem I (PSI) complex. May act as a chaperone-like factor to guide the assembly of the PSI subunits. The sequence is that of Photosystem I assembly protein Ycf3 from Parasynechococcus marenigrum (strain WH8102).